Here is an 807-residue protein sequence, read N- to C-terminus: Glycerol-3-phosphate acyltransferase (807 aa).

Positions 308–313 (CHRSHM) match the HXXXXD motif motif.

The protein belongs to the GPAT/DAPAT family.

It is found in the cell inner membrane. It catalyses the reaction sn-glycerol 3-phosphate + an acyl-CoA = a 1-acyl-sn-glycero-3-phosphate + CoA. Its pathway is phospholipid metabolism; CDP-diacylglycerol biosynthesis; CDP-diacylglycerol from sn-glycerol 3-phosphate: step 1/3. This chain is Glycerol-3-phosphate acyltransferase, found in Shewanella frigidimarina (strain NCIMB 400).